A 1358-amino-acid chain; its full sequence is DNA-directed RNA polymerase subunit beta (1358 aa).

The protein belongs to the RNA polymerase beta chain family. The RNAP catalytic core consists of 2 alpha, 1 beta, 1 beta' and 1 omega subunit. When a sigma factor is associated with the core the holoenzyme is formed, which can initiate transcription.

The catalysed reaction is RNA(n) + a ribonucleoside 5'-triphosphate = RNA(n+1) + diphosphate. DNA-dependent RNA polymerase catalyzes the transcription of DNA into RNA using the four ribonucleoside triphosphates as substrates. The protein is DNA-directed RNA polymerase subunit beta of Francisella tularensis subsp. tularensis (strain FSC 198).